The sequence spans 201 residues: Thymidine kinase (201 aa).

Residues 9–16 (SAMNAGKS) and 87–90 (DECH) each bind ATP. Glu-88 (proton acceptor) is an active-site residue. Zn(2+) contacts are provided by Cys-145, Cys-147, Cys-182, and His-185.

It belongs to the thymidine kinase family. In terms of assembly, homotetramer.

The protein resides in the cytoplasm. The catalysed reaction is thymidine + ATP = dTMP + ADP + H(+). This is Thymidine kinase from Photorhabdus laumondii subsp. laumondii (strain DSM 15139 / CIP 105565 / TT01) (Photorhabdus luminescens subsp. laumondii).